A 185-amino-acid chain; its full sequence is Ribosome-recycling factor (185 aa).

The protein belongs to the RRF family.

The protein localises to the cytoplasm. Its function is as follows. Responsible for the release of ribosomes from messenger RNA at the termination of protein biosynthesis. May increase the efficiency of translation by recycling ribosomes from one round of translation to another. This Thermotoga petrophila (strain ATCC BAA-488 / DSM 13995 / JCM 10881 / RKU-1) protein is Ribosome-recycling factor.